The primary structure comprises 320 residues: Glutaconate CoA-transferase subunit A (320 aa).

The protein belongs to the 3-oxoacid CoA-transferase subunit A family. In terms of assembly, heterooctamer of four A and four B subunits.

It is found in the cytoplasm. It catalyses the reaction trans-glutaconate + acetyl-CoA = (2E)-glutaconyl-CoA + acetate. The protein operates within amino-acid degradation; L-glutamate degradation via hydroxyglutarate pathway; crotonoyl-CoA from L-glutamate: step 3/5. Functionally, catalyzes the transfer of the CoA moiety from acetyl-CoA to (R)-2-hydroxyglutarate and related compounds like glutaconate. This Acidaminococcus fermentans (strain ATCC 25085 / DSM 20731 / CCUG 9996 / CIP 106432 / VR4) protein is Glutaconate CoA-transferase subunit A (gctA).